Consider the following 55-residue polypeptide: Large ribosomal subunit protein bL33 (55 aa).

This sequence belongs to the bacterial ribosomal protein bL33 family.

The chain is Large ribosomal subunit protein bL33 from Proteus mirabilis (strain HI4320).